The sequence spans 385 residues: T-box transcription factor TBX10 (385 aa).

A disordered region spans residues 22–61 (TTSSGWEPRLGSPFPSGPCTSSTGAQAVAEPTGQGPKNPR). A DNA-binding region (T-box) is located at residues 69–252 (LEMKPLWEEF…SNPFAKGFRE (184 aa)).

Its subcellular location is the nucleus. Functionally, probable transcriptional regulator involved in developmental processes. This is T-box transcription factor TBX10 (TBX10) from Homo sapiens (Human).